Here is an 84-residue protein sequence, read N- to C-terminus: Small ribosomal subunit protein uS17 (84 aa).

It belongs to the universal ribosomal protein uS17 family. Part of the 30S ribosomal subunit.

In terms of biological role, one of the primary rRNA binding proteins, it binds specifically to the 5'-end of 16S ribosomal RNA. This Clostridium perfringens (strain SM101 / Type A) protein is Small ribosomal subunit protein uS17.